A 301-amino-acid polypeptide reads, in one-letter code: 4-hydroxy-tetrahydrodipicolinate synthase (301 aa).

Thr57 is a binding site for pyruvate. The active-site Proton donor/acceptor is the Tyr145. Residue Lys173 is the Schiff-base intermediate with substrate of the active site. Ile213 provides a ligand contact to pyruvate.

This sequence belongs to the DapA family. In terms of assembly, homotetramer; dimer of dimers.

It is found in the cytoplasm. The catalysed reaction is L-aspartate 4-semialdehyde + pyruvate = (2S,4S)-4-hydroxy-2,3,4,5-tetrahydrodipicolinate + H2O + H(+). Its pathway is amino-acid biosynthesis; L-lysine biosynthesis via DAP pathway; (S)-tetrahydrodipicolinate from L-aspartate: step 3/4. Its function is as follows. Catalyzes the condensation of (S)-aspartate-beta-semialdehyde [(S)-ASA] and pyruvate to 4-hydroxy-tetrahydrodipicolinate (HTPA). This is 4-hydroxy-tetrahydrodipicolinate synthase from Corynebacterium diphtheriae (strain ATCC 700971 / NCTC 13129 / Biotype gravis).